A 164-amino-acid chain; its full sequence is Protein HIT1 (164 aa).

Positions 8, 11, 28, and 32 each coordinate Zn(2+). The HIT-type; degenerate zinc finger occupies 8 to 49 (CGICRGVDGKYKCPKCGVRYCSLKCYKDAAKHVHKESEQPRA).

The chain is Protein HIT1 (HIT1) from Saccharomyces cerevisiae (strain ATCC 204508 / S288c) (Baker's yeast).